The following is a 1155-amino-acid chain: MIKRVHLGQGKAEEILNLPNLIEIQLNSYEKFLQLERLKNNKPLLNEGLESVFRDVFPMKSSNGEVALEYEKYYIEYDSISFTEKECKRKGQSYEAVLKIRLNLQFLTTGEIRQKDVYMGTIPLMTDRGTFIVNGAERVIVSQIHRSPGVVFYKEKDLYYARIIPYRGSWLEFEIDSKKDYLYVKIDRKKRILVTLFLRALGLDTREKIIETFYKIRKIEVNDDTKREITGQYLATNITIKENMTYRAGDKITLQDIEDFLQNGVKEINLIDFDGYDSVPGKHFISSDVILNCFEKEDAYFALKDGFKELSRESVMLAVYSVLLPGEPISIDNAENDLRTIFFSEKRYDLGHVGRYKLSKKFGLDDLTTSVLTMTDIVNTISHLLRIYDGHDVLDDIDHLGNRRVRSVGELLTNIYKGAMSRVEKIAKDRMSNKEVFNLKPQELISVKPVVSAVKEFFATSQLSQFMDQVNPLAELTHKRRLNALGPGGLSRDRAGFEVRDVHYTHYGRMCPIETPEGPNIGLIVSLATYSKVNDYGFLETPYRKVIDGKVTDDIEYLSAIDEEKKCIAQANASVSSDGNYTDDLVSVRISGDYTTMMPKNIDYMDVSPRQLISVSSALIPFLEHNDANRALMGSNMQRQAVPLLFPQPPIVGTGMERIVAKDSGVVIKAKRPGRVVLATNKKIVIKPDNATSERDLDEYELYKYERTNQDTSFNHSVLVKNGQIVNKDEIIADGPATRYGELALGNNLLVGFIPWNGFNYEDAILISERIVKEDLYTSIHIKEFSIEVRETKLGPEKVTADIPNVSGKILSKLDENGIVRIGTYVKPGDILIGKVTPKSEGDITPEFKLLTSIFGEKAKDVKNNSLKVPHGTEGTVIDVQRITKDDVGNLPPGVDEILKVYIAKKRKLKEGDKMAGRHGNKGVVAKILPVEDMPYLADGTPLDICLNPLGVPSRMNIGQLMESQLGLAGKYLGEYYDVPVFESATNECIQEKLKKAGFNETSKAVLYDGYTGEPFENEVMVGVIYMLKLHHLVDDKMHARSTGPYSLVSQQPLGGKAQFGGQRLGEMEVWALEAYGAAHTLQELLTVKSDDMSGRVKIYENIVKGIPTNVSGIPESFNVLMQELRGLGFDLSIYDDNGNQIPLTEKEEELINKT.

The protein belongs to the RNA polymerase beta chain family. In terms of assembly, the RNAP catalytic core consists of 2 alpha, 1 beta, 1 beta' and 1 omega subunit. When a sigma factor is associated with the core the holoenzyme is formed, which can initiate transcription.

The catalysed reaction is RNA(n) + a ribonucleoside 5'-triphosphate = RNA(n+1) + diphosphate. In terms of biological role, DNA-dependent RNA polymerase catalyzes the transcription of DNA into RNA using the four ribonucleoside triphosphates as substrates. The sequence is that of DNA-directed RNA polymerase subunit beta from Borrelia recurrentis (strain A1).